The sequence spans 699 residues: Ubiquitin-like modifier-activating enzyme atg7 (699 aa).

The GXGXXG motif signature appears at 370–375 (GAGTLG). The active-site Glycyl thioester intermediate is Cys-550. The disordered stretch occupies residues 680-699 (MQWSEDEEGMDEEEGEGELI). A compositionally biased stretch (acidic residues) spans 682–699 (WSEDEEGMDEEEGEGELI).

This sequence belongs to the ATG7 family. Homodimer.

It localises to the cytoplasm. It is found in the preautophagosomal structure. Functionally, E1-like activating enzyme involved in the 2 ubiquitin-like systems required for cytoplasm to vacuole transport (Cvt) and autophagy. Activates atg12 for its conjugation with apg-4/atg5 and apg-6/atg8 for its conjugation with phosphatidylethanolamine. Both systems are needed for the apg-6/atg8 association to Cvt vesicles and autophagosomes membranes. Autophagy is essential for maintenance of amino acid levels and protein synthesis under nitrogen starvation. Required for selective autophagic degradation of the nucleus (nucleophagy) as well as for mitophagy which contributes to regulate mitochondrial quantity and quality by eliminating the mitochondria to a basal level to fulfill cellular energy requirements and preventing excess ROS production. Plays a role in the regulation of filamentous growth and chronological longevity. This chain is Ubiquitin-like modifier-activating enzyme atg7 (apg-5), found in Neurospora crassa (strain ATCC 24698 / 74-OR23-1A / CBS 708.71 / DSM 1257 / FGSC 987).